Reading from the N-terminus, the 531-residue chain is Transcription factor LG2 (531 aa).

Disordered stretches follow at residues 115–154 (RHQQQLHSGNSQSVGSTGTDSSSAQNTMSQMELVSPASSA) and 195–220 (LHGGEGGGDHDKRKHGSTRKDGKLVD). A compositionally biased stretch (polar residues) spans 116–154 (HQQQLHSGNSQSVGSTGTDSSSAQNTMSQMELVSPASSA). A bZIP domain is found at 220-264 (DAKTERRLAQNREAARKSRLRKKAYVQQLETSRIRLQQVEHELQR). Positions 222 to 242 (KTERRLAQNREAARKSRLRKK) are basic motif. Residues 224–231 (ERRLAQNR) carry the Nuclear localization signal motif. The leucine-zipper stretch occupies residues 248–262 (LETSRIRLQQVEHEL). A DOG1 domain is found at 285-499 (AAMFDMEYAR…RALSNLWASR (215 aa)).

Belongs to the bZIP family. As to quaternary structure, binds DNA as a dimer. Expression in meristem/developing ligule regions.

Its subcellular location is the nucleus. Required for the formation of the blade-sheath boundary in leaves. Promotes flowering. This is Transcription factor LG2 from Zea mays (Maize).